Reading from the N-terminus, the 597-residue chain is Elongation factor 4 (597 aa).

In terms of domain architecture, tr-type G spans 2–184 (KHIRNFSIIA…NIVSAIPAPE (183 aa)). Residues 14–19 (DHGKST) and 131–134 (NKID) each bind GTP.

It belongs to the TRAFAC class translation factor GTPase superfamily. Classic translation factor GTPase family. LepA subfamily.

It localises to the cell inner membrane. It catalyses the reaction GTP + H2O = GDP + phosphate + H(+). Its function is as follows. Required for accurate and efficient protein synthesis under certain stress conditions. May act as a fidelity factor of the translation reaction, by catalyzing a one-codon backward translocation of tRNAs on improperly translocated ribosomes. Back-translocation proceeds from a post-translocation (POST) complex to a pre-translocation (PRE) complex, thus giving elongation factor G a second chance to translocate the tRNAs correctly. Binds to ribosomes in a GTP-dependent manner. The protein is Elongation factor 4 of Vibrio campbellii (strain ATCC BAA-1116).